Consider the following 275-residue polypeptide: 4-hydroxy-tetrahydrodipicolinate reductase (275 aa).

Residues Gly-13–Met-18 and Gly-108–Thr-110 each bind NAD(+). His-164 (proton donor/acceptor) is an active-site residue. His-165 serves as a coordination point for (S)-2,3,4,5-tetrahydrodipicolinate. Lys-168 acts as the Proton donor in catalysis. Gly-174–Thr-175 contacts (S)-2,3,4,5-tetrahydrodipicolinate.

Belongs to the DapB family.

Its subcellular location is the cytoplasm. It catalyses the reaction (S)-2,3,4,5-tetrahydrodipicolinate + NAD(+) + H2O = (2S,4S)-4-hydroxy-2,3,4,5-tetrahydrodipicolinate + NADH + H(+). It carries out the reaction (S)-2,3,4,5-tetrahydrodipicolinate + NADP(+) + H2O = (2S,4S)-4-hydroxy-2,3,4,5-tetrahydrodipicolinate + NADPH + H(+). Its pathway is amino-acid biosynthesis; L-lysine biosynthesis via DAP pathway; (S)-tetrahydrodipicolinate from L-aspartate: step 4/4. In terms of biological role, catalyzes the conversion of 4-hydroxy-tetrahydrodipicolinate (HTPA) to tetrahydrodipicolinate. The sequence is that of 4-hydroxy-tetrahydrodipicolinate reductase from Rippkaea orientalis (strain PCC 8801 / RF-1) (Cyanothece sp. (strain PCC 8801)).